The chain runs to 244 residues: Putative esophageal gland cell secretory protein 6 (244 aa).

The first 22 residues, 1–22, serve as a signal peptide directing secretion; the sequence is MDRRFTVFLVIALVTSIYEVLS. Residues cysteine 88 and cysteine 91 are joined by a disulfide bond.

It belongs to the SelWTH family. SELT subfamily.

The protein is Putative esophageal gland cell secretory protein 6 (HSP6) of Heterodera glycines (Soybean cyst nematode worm).